A 442-amino-acid chain; its full sequence is tRNA modification GTPase MnmE (442 aa).

(6S)-5-formyl-5,6,7,8-tetrahydrofolate-binding residues include R21, E79, and K118. The 154-residue stretch at 214 to 367 (GFKIAIVGKP…LKEELQNYLN (154 aa)) folds into the TrmE-type G domain. N224 provides a ligand contact to K(+). GTP is bound by residues 224 to 229 (NVGKSS), 243 to 249 (SDIAGTT), and 268 to 271 (DTAG). S228 contributes to the Mg(2+) binding site. S243, I245, and T248 together coordinate K(+). T249 lines the Mg(2+) pocket. K442 contacts (6S)-5-formyl-5,6,7,8-tetrahydrofolate.

This sequence belongs to the TRAFAC class TrmE-Era-EngA-EngB-Septin-like GTPase superfamily. TrmE GTPase family. Homodimer. Heterotetramer of two MnmE and two MnmG subunits. K(+) is required as a cofactor.

The protein localises to the cytoplasm. Exhibits a very high intrinsic GTPase hydrolysis rate. Involved in the addition of a carboxymethylaminomethyl (cmnm) group at the wobble position (U34) of certain tRNAs, forming tRNA-cmnm(5)s(2)U34. This chain is tRNA modification GTPase MnmE, found in Campylobacter jejuni subsp. jejuni serotype O:23/36 (strain 81-176).